The sequence spans 434 residues: Putative nuclease OPG089 (434 aa).

This sequence belongs to the XPG/RAD2 endonuclease family. FEN1 subfamily. Requires Mg(2+) as cofactor.

The protein localises to the virion. Putative nuclease that seems to be required for double-strand break repair, homologous recombination, and production of full-length viral genomic DNA. This chain is Putative nuclease OPG089 (OPG089), found in Monkeypox virus.